Reading from the N-terminus, the 276-residue chain is Octanoyltransferase LipM (276 aa).

The BPL/LPL catalytic domain occupies 31–246; the sequence is GLIPPTIRFY…GFEKGLSIKL (216 aa). Cys-148 acts as the Acyl-thioester intermediate in catalysis.

Belongs to the octanoyltransferase LipM family. In terms of assembly, monomer.

It catalyses the reaction octanoyl-[ACP] + L-lysyl-[protein] = N(6)-octanoyl-L-lysyl-[protein] + holo-[ACP] + H(+). The protein operates within protein modification; protein lipoylation via endogenous pathway; protein N(6)-(lipoyl)lysine from octanoyl-[acyl-carrier-protein]. Functionally, catalyzes the transfer of endogenously produced octanoic acid from octanoyl-acyl-carrier-protein onto the lipoyl domain of GcvH, an intermediate carrier during protein lipoylation. The polypeptide is Octanoyltransferase LipM (Halalkalibacterium halodurans (strain ATCC BAA-125 / DSM 18197 / FERM 7344 / JCM 9153 / C-125) (Bacillus halodurans)).